A 140-amino-acid chain; its full sequence is Thioredoxin M-type, chloroplastic (140 aa).

The N-terminal 34 residues, Met1 to Ala34, are a transit peptide targeting the chloroplast. Positions Glu35–Asn140 constitute a Thioredoxin domain. Active-site nucleophile residues include Cys64 and Cys67. Cys64 and Cys67 are oxidised to a cystine.

It belongs to the thioredoxin family. Plant M-type subfamily. Forms a complex with heterodimeric ferredoxin-thioredoxin reductase (FTR) and ferredoxin.

The protein resides in the plastid. It is found in the chloroplast. Participates in various redox reactions through the reversible oxidation of the active center dithiol to a disulfide. The M form is known to activate NADP-malate dehydrogenase. The polypeptide is Thioredoxin M-type, chloroplastic (TRXM) (Chlamydomonas reinhardtii (Chlamydomonas smithii)).